Here is a 410-residue protein sequence, read N- to C-terminus: Divergent protein kinase domain 1A (410 aa).

The Cytoplasmic segment spans residues 1–5 (MARLS). A helical membrane pass occupies residues 6 to 26 (YVRIKYLFFSWLAVFIGSWVI). The Lumenal segment spans residues 27-410 (YVRYNSYTEL…WKKISHTNDS (384 aa)).

It belongs to the DIPK family. In terms of processing, among the many cysteines in the lumenal domain, most are probably involved in disulfide bonds.

Its subcellular location is the endoplasmic reticulum membrane. The protein is Divergent protein kinase domain 1A (dipk1a) of Xenopus laevis (African clawed frog).